Here is a 1411-residue protein sequence, read N- to C-terminus: DNA-directed RNA polymerase subunit beta' (1411 aa).

C70, C72, C85, and C88 together coordinate Zn(2+). Mg(2+)-binding residues include D460, D462, and D464. Zn(2+)-binding residues include C814, C888, C895, and C898.

This sequence belongs to the RNA polymerase beta' chain family. As to quaternary structure, the RNAP catalytic core consists of 2 alpha, 1 beta, 1 beta' and 1 omega subunit. When a sigma factor is associated with the core the holoenzyme is formed, which can initiate transcription. The cofactor is Mg(2+). Requires Zn(2+) as cofactor.

The enzyme catalyses RNA(n) + a ribonucleoside 5'-triphosphate = RNA(n+1) + diphosphate. Its function is as follows. DNA-dependent RNA polymerase catalyzes the transcription of DNA into RNA using the four ribonucleoside triphosphates as substrates. The chain is DNA-directed RNA polymerase subunit beta' from Idiomarina loihiensis (strain ATCC BAA-735 / DSM 15497 / L2-TR).